The sequence spans 372 residues: tRNA-specific 2-thiouridylase MnmA (372 aa).

ATP contacts are provided by residues 16–23 and Met42; that span reads GMSGGVDS. The segment at 102–104 is interaction with target base in tRNA; that stretch reads NPD. Residue Cys107 is the Nucleophile of the active site. Cysteines 107 and 205 form a disulfide. Gly132 lines the ATP pocket. An interaction with tRNA region spans residues 155 to 157; it reads KDQ. Cys205 (cysteine persulfide intermediate) is an active-site residue. The interaction with tRNA stretch occupies residues 317-318; that stretch reads RY.

The protein belongs to the MnmA/TRMU family.

It is found in the cytoplasm. It carries out the reaction S-sulfanyl-L-cysteinyl-[protein] + uridine(34) in tRNA + AH2 + ATP = 2-thiouridine(34) in tRNA + L-cysteinyl-[protein] + A + AMP + diphosphate + H(+). Its function is as follows. Catalyzes the 2-thiolation of uridine at the wobble position (U34) of tRNA, leading to the formation of s(2)U34. The protein is tRNA-specific 2-thiouridylase MnmA of Shewanella sp. (strain ANA-3).